The following is a 64-amino-acid chain: Large ribosomal subunit protein bL33m (64 aa).

This sequence belongs to the bacterial ribosomal protein bL33 family. Component of the mitochondrial ribosome large subunit (39S) which comprises a 16S rRNA and about 50 distinct proteins.

It is found in the mitochondrion. The polypeptide is Large ribosomal subunit protein bL33m (mRpL33) (Drosophila melanogaster (Fruit fly)).